The chain runs to 199 residues: MKVGAEVRRRGNREDGRQVMARLKKTVVMVGMMGAGKTAVGSALARGLNVPFLDSDEEIERAANRTIAEIFARDGEPFFREKESQVLARLLRGSPCVLSTGGGAFMAEGNRRMIREQGVSVWLKADLDVLWHRVRHKATRPLLRTPNPRETLRALLEARDPVYAQADLAVESGEGTVEQMAVRVREALATRPDVLETDE.

34 to 39 serves as a coordination point for ATP; it reads GAGKTA. Threonine 38 is a Mg(2+) binding site. The substrate site is built by aspartate 56, arginine 80, and glycine 102. Arginine 140 serves as a coordination point for ATP. Arginine 159 serves as a coordination point for substrate.

This sequence belongs to the shikimate kinase family. Monomer. Mg(2+) serves as cofactor.

It is found in the cytoplasm. It catalyses the reaction shikimate + ATP = 3-phosphoshikimate + ADP + H(+). It functions in the pathway metabolic intermediate biosynthesis; chorismate biosynthesis; chorismate from D-erythrose 4-phosphate and phosphoenolpyruvate: step 5/7. Its function is as follows. Catalyzes the specific phosphorylation of the 3-hydroxyl group of shikimic acid using ATP as a cosubstrate. This is Shikimate kinase from Cereibacter sphaeroides (strain ATCC 17023 / DSM 158 / JCM 6121 / CCUG 31486 / LMG 2827 / NBRC 12203 / NCIMB 8253 / ATH 2.4.1.) (Rhodobacter sphaeroides).